Reading from the N-terminus, the 185-residue chain is Ribosome-recycling factor (185 aa).

This sequence belongs to the RRF family.

It localises to the cytoplasm. Functionally, responsible for the release of ribosomes from messenger RNA at the termination of protein biosynthesis. May increase the efficiency of translation by recycling ribosomes from one round of translation to another. This is Ribosome-recycling factor from Frankia casuarinae (strain DSM 45818 / CECT 9043 / HFP020203 / CcI3).